The primary structure comprises 407 residues: Magnesium-protoporphyrin IX monomethyl ester [oxidative] cyclase 1, chloroplastic (407 aa).

Polar residues predominate over residues 1–10 (MQTTLKQQRA). The segment at 1–28 (MQTTLKQQRASGRVSARQPFRSAAVARP) is disordered.

The protein belongs to the AcsF family. The cofactor is Fe cation.

Its subcellular location is the plastid. It localises to the chloroplast thylakoid membrane. The enzyme catalyses Mg-protoporphyrin IX 13-monomethyl ester + 3 NADPH + 3 O2 + 2 H(+) = 3,8-divinyl protochlorophyllide a + 3 NADP(+) + 5 H2O. The protein operates within porphyrin-containing compound metabolism; chlorophyll biosynthesis. In terms of biological role, catalyzes the formation of the isocyclic ring in chlorophyll biosynthesis under oxygen- and copper-deficient conditions. Mediates the cyclase reaction, which results in the formation of divinylprotochlorophyllide (Pchlide) characteristic of all chlorophylls from magnesium-protoporphyrin IX 13-monomethyl ester (MgPMME). The sequence is that of Magnesium-protoporphyrin IX monomethyl ester [oxidative] cyclase 1, chloroplastic (CRD1) from Chlamydomonas reinhardtii (Chlamydomonas smithii).